Reading from the N-terminus, the 653-residue chain is Protein SCARECROW (653 aa).

Disordered regions lie at residues 1–69 (MAES…RRVS) and 193–265 (PSSS…AVQT). Positions 17 to 31 (PLRTTSSGSSSSNNR) are enriched in low complexity. Over residues 32 to 41 (GPPPPPPPPL) the composition is skewed to pro residues. Residues 51–63 (EMSSNPDYNNSSR) show a composition bias toward polar residues. Low complexity predominate over residues 209-230 (QISNNPSPPQQQQQHQQQQQQH). Over residues 246–265 (STDAPPQPETVTATVPAVQT) the composition is skewed to polar residues. Residues 281 to 650 (QKQDEEGLHL…LSLLTASAWT (370 aa)) enclose the GRAS domain. Residues 288-351 (LHLLTLLLQC…LLNSCLGIYA (64 aa)) form a leucine repeat I (LRI) region. The LxCxE motif motif lies at 295–299 (LQCAE). The interval 370-435 (FQVFNGISPL…GGPPHVRLTG (66 aa)) is VHIID. A VHIID motif is present at residues 401–405 (VHIID). Residues 445–477 (ATGKRLSDFADKLGLPFEFCPLAEKVGNLDTER) are leucine repeat II (LRII). The tract at residues 486–573 (VAVHWLQHSL…QQLLSKEIRN (88 aa)) is PFYRE. The tract at residues 576-650 (AVGGPSRSGE…LSLLTASAWT (75 aa)) is SAW.

This sequence belongs to the GRAS family. Interacts with SHR, JKD and MGP. Interacts with SIEL. Interacts with RBR1 through its the LxCxE motif. In terms of tissue distribution, expressed in siliques, leaves and roots. Detected in the initial daughter cell before its asymmetric division and remains expressed only in the endodermal cell layer after the division. Expressed in the endodermis or starch sheath of the seedling hypocotyl, in the leaf bundle sheath cells and the root quiescent center.

The protein resides in the nucleus. Transcription factor required for quiescent center cells specification and maintenance of surrounding stem cells, and for the asymmetric cell division involved in radial pattern formation in roots. Essential for cell division but not differentiation of the ground tissue. Also required for normal shoot gravitropism. Regulates the radial organization of the shoot axial organs. Binds to the promoter of MGP, NUC, RLK and SCL3. Restricts SHR movment and sequesters it into the nucleus of the endodermis. The chain is Protein SCARECROW from Arabidopsis thaliana (Mouse-ear cress).